The chain runs to 315 residues: Biotin synthase (315 aa).

In terms of domain architecture, Radical SAM core spans 39 to 266 (NSLQFATLLS…KSAIRLTAGR (228 aa)). [4Fe-4S] cluster is bound by residues cysteine 54, cysteine 58, and cysteine 61. [2Fe-2S] cluster-binding residues include cysteine 98, cysteine 129, cysteine 189, and arginine 261.

The protein belongs to the radical SAM superfamily. Biotin synthase family. Homodimer. It depends on [4Fe-4S] cluster as a cofactor. Requires [2Fe-2S] cluster as cofactor.

It catalyses the reaction (4R,5S)-dethiobiotin + (sulfur carrier)-SH + 2 reduced [2Fe-2S]-[ferredoxin] + 2 S-adenosyl-L-methionine = (sulfur carrier)-H + biotin + 2 5'-deoxyadenosine + 2 L-methionine + 2 oxidized [2Fe-2S]-[ferredoxin]. It functions in the pathway cofactor biosynthesis; biotin biosynthesis; biotin from 7,8-diaminononanoate: step 2/2. Functionally, catalyzes the conversion of dethiobiotin (DTB) to biotin by the insertion of a sulfur atom into dethiobiotin via a radical-based mechanism. In Legionella pneumophila (strain Lens), this protein is Biotin synthase.